Here is a 106-residue protein sequence, read N- to C-terminus: uncharacterized protein (106 aa).

The next 4 membrane-spanning stretches (helical) occupy residues W3–I23, K29–A49, M50–V70, and F82–L102.

This sequence belongs to the drug/metabolite transporter (DMT) superfamily. Small multidrug resistance (SMR) (TC 2.A.7.1) family.

Its subcellular location is the cell membrane. This is an uncharacterized protein from Bacillus subtilis (strain 168).